The primary structure comprises 616 residues: Chaperone protein HscA (616 aa).

The protein belongs to the heat shock protein 70 family.

Chaperone involved in the maturation of iron-sulfur cluster-containing proteins. Has a low intrinsic ATPase activity which is markedly stimulated by HscB. Involved in the maturation of IscU. This chain is Chaperone protein HscA, found in Salmonella heidelberg (strain SL476).